The primary structure comprises 284 residues: RNase adapter protein RapZ (284 aa).

8-15 provides a ligand contact to ATP; the sequence is GRSGSGKS. 56-59 contributes to the GTP binding site; the sequence is DVRN. The RNA-binding stretch occupies residues 266–284; that stretch reads RSRGKNVQSRHRTLEKRKT.

The protein belongs to the RapZ-like family. RapZ subfamily. As to quaternary structure, homotrimer.

In terms of biological role, modulates the synthesis of GlmS, by affecting the processing and stability of the regulatory small RNA GlmZ. When glucosamine-6-phosphate (GlcN6P) concentrations are high in the cell, RapZ binds GlmZ and targets it to cleavage by RNase E. Consequently, GlmZ is inactivated and unable to activate GlmS synthesis. Under low GlcN6P concentrations, RapZ is sequestered and inactivated by an other regulatory small RNA, GlmY, preventing GlmZ degradation and leading to synthesis of GlmS. The protein is RNase adapter protein RapZ of Salmonella typhimurium (strain LT2 / SGSC1412 / ATCC 700720).